The sequence spans 646 residues: Autophagy-related protein 28 (646 aa).

Disordered regions lie at residues 1 to 148 (MSSP…HVDN) and 221 to 245 (PTRSTPDGNVIPVRQPVSNKPRGLK). Over residues 12–21 (SPRQRLSNPL) the composition is skewed to polar residues. The span at 63–75 (SATSTRRSSSPAS) shows a compositional bias: low complexity. Positions 106-122 (MMMNQHPSRQSTVSSHG) are enriched in polar residues. Coiled-coil stretches lie at residues 283 to 350 (LDKM…MEDV) and 485 to 514 (QQAAMQSQLSEMDDVVQELQKRLQLAESKH). Disordered regions lie at residues 475-494 (SQAGDADEEPQQAAMQSQLS) and 546-612 (AAAV…RGSA). 2 stretches are compositionally biased toward basic and acidic residues: residues 557–575 (STDKAEGTSQEERADSHDE) and 588–597 (RMEDHDHDPP).

Belongs to the ATG28 family.

Its subcellular location is the cytoplasm. It is found in the vacuole membrane. The protein localises to the cytoplasmic vesicle membrane. In terms of biological role, required for the autophagic degradation of peroxisomes called pexophagy, but not essential for general autophagy. Involved in resistance to elevated pH. In Gibberella zeae (strain ATCC MYA-4620 / CBS 123657 / FGSC 9075 / NRRL 31084 / PH-1) (Wheat head blight fungus), this protein is Autophagy-related protein 28.